A 69-amino-acid polypeptide reads, in one-letter code: MKASEIKGLSRDDLLKREKDAKEELFNLRFQQAAGQLENTARLSTVKKDIARIKTELWAQEIAAEKAKA.

This sequence belongs to the universal ribosomal protein uL29 family.

In Oenococcus oeni (strain ATCC BAA-331 / PSU-1), this protein is Large ribosomal subunit protein uL29.